Reading from the N-terminus, the 157-residue chain is Ribosomal RNA large subunit methyltransferase H (157 aa).

S-adenosyl-L-methionine contacts are provided by residues Leu73, Gly105, and 124 to 129; that span reads LSKMTF.

Belongs to the RNA methyltransferase RlmH family. Homodimer.

It localises to the cytoplasm. It carries out the reaction pseudouridine(1915) in 23S rRNA + S-adenosyl-L-methionine = N(3)-methylpseudouridine(1915) in 23S rRNA + S-adenosyl-L-homocysteine + H(+). Specifically methylates the pseudouridine at position 1915 (m3Psi1915) in 23S rRNA. This chain is Ribosomal RNA large subunit methyltransferase H, found in Christiangramia forsetii (strain DSM 17595 / CGMCC 1.15422 / KT0803) (Gramella forsetii).